A 150-amino-acid polypeptide reads, in one-letter code: Endoribonuclease YbeY (150 aa).

Residues histidine 112, histidine 116, and histidine 122 each coordinate Zn(2+).

Belongs to the endoribonuclease YbeY family. Zn(2+) serves as cofactor.

It localises to the cytoplasm. Its function is as follows. Single strand-specific metallo-endoribonuclease involved in late-stage 70S ribosome quality control and in maturation of the 3' terminus of the 16S rRNA. The chain is Endoribonuclease YbeY from Bdellovibrio bacteriovorus (strain ATCC 15356 / DSM 50701 / NCIMB 9529 / HD100).